Reading from the N-terminus, the 550-residue chain is MKEAELNRDVAKFCTDNQCVILQPQGLGPKSAAPMAPRTLRHVQAIVALVVVTVFFSLLALFVVVLQPWRQKQNEDHPVKAGLHGGNYSGSDNCSQFVRRAEMQEAIQSLRASGNSSSCHKEIQTLKYQMDNVSSQVQLLGGHLEEANADIQQAKDVLKGTGALASETQALRSSLEVASADIHSLRGDLEKANAMTSQTQGLLKSSTDNTSAELHVLGRGLEEAQSEIQALRGSLQSSNDLGSRTQNFLQHSMDNISAEIQAMRDGMQRAGEEMTSLKKDLETLTAQIQNANGHLEQTDTQIQGLKAQLKSTSSLNSQIEVVNGKLKDSSRELQTLRRDLSDVSALKSNVQMLQSNLQKAKAEVQSLKTGLEATKTLAAKIQGQQSDLEALQKAVAAHTQGQKTQNQVLQLIMQDWKYFNGKFYYFSRDKKSWHEAENFCVSQGAHLASVTSQEEQAFLVQITNAVDHWIGLTDQGTEGNWRWVDGTPFDYVQSRRFWRKGQPDNWRHGNGEREDCVHLQRMWNDMACGTAYNWVCKKSTDWSVARTDQS.

At 1–42 (MKEAELNRDVAKFCTDNQCVILQPQGLGPKSAAPMAPRTLRH) the chain is on the cytoplasmic side. Residues 43-69 (VQAIVALVVVTVFFSLLALFVVVLQPW) form a helical; Signal-anchor for type II membrane protein membrane-spanning segment. At 70 to 550 (RQKQNEDHPV…DWSVARTDQS (481 aa)) the chain is on the extracellular side. 6 N-linked (GlcNAc...) asparagine glycosylation sites follow: Asn87, Asn93, Asn115, Asn132, Asn209, and Asn255. A C-type lectin domain is found at 438–538 (NFCVSQGAHL…GTAYNWVCKK (101 aa)). Cystine bridges form between Cys440/Cys536 and Cys516/Cys528.

Kupffer cells.

Its subcellular location is the membrane. Functionally, receptor with an affinity for galactose and fucose. Could be involved in endocytosis. The polypeptide is C-type lectin domain family 4 member F (Clec4f) (Rattus norvegicus (Rat)).